A 222-amino-acid chain; its full sequence is Glutathione S-transferase 3 (222 aa).

The 82-residue stretch at Ala-2–Gly-83 folds into the GST N-terminal domain. Glutathione-binding positions include Ser-12, Pro-13–Asn-14, His-41–Lys-42, Gln-54–Ile-55, and Glu-67–Ser-68. In terms of domain architecture, GST C-terminal spans Ala-89 to Ser-219.

The protein belongs to the GST superfamily. Phi family. Homodimer.

It carries out the reaction RX + glutathione = an S-substituted glutathione + a halide anion + H(+). Its function is as follows. Conjugation of reduced glutathione to a wide number of exogenous and endogenous hydrophobic electrophiles. Involved in the detoxification of certain herbicides. The chain is Glutathione S-transferase 3 from Zea mays (Maize).